Consider the following 633-residue polypeptide: Alpha-amylase (633 aa).

Glu123 functions as the Nucleophile in the catalytic mechanism. The active-site Proton donor is the Asp214.

Belongs to the glycosyl hydrolase 57 family.

The catalysed reaction is Endohydrolysis of (1-&gt;4)-alpha-D-glucosidic linkages in polysaccharides containing three or more (1-&gt;4)-alpha-linked D-glucose units.. The polypeptide is Alpha-amylase (amyA) (Pyrococcus horikoshii (strain ATCC 700860 / DSM 12428 / JCM 9974 / NBRC 100139 / OT-3)).